The primary structure comprises 486 residues: MTSVRGASKTGRTSKTSTATTALVLACTAHFLVVFDTSVITVALPSVRADLGFAPASLQWVVNSYTLAFAGLLLFGGRLADIHGHRRVFLGGLAVFTLTSLIGGLATSPASLIAARAGQGAGAAVLAPLAVTMLTTSFAEGPRRTRALTISTAVALVGGASGNLLGGVFTEFLSWRSVLLVNVPIGIPVLFLAARVLAGPRKRPWGRVRLDLPGAVLATAGLTLLTLGVSQTHEHGWGEAAVAVPLAGGLLALLAFVVVEARFAASPLIPPRLFGLPGVGWGNLAMLLAGASQVPVWFFLTLSMQHVLGYSAAQAGLGFVPHALVMLVVGLRVVPWLMRHVQARVLIAAGAAIGALGFWWQSLLTPDSAYLGGILGPAVLISIGGGLVGTPLARTVTSGVGPLDAGAASGLMNTTRQFGGAFGLAVLLTVTGSGTSGSPAELASHYGDAFVGIAVFMLAIAVLTPVLPALARSTPPGVIHVSPVAR.

The next 14 membrane-spanning stretches (helical) occupy residues 24 to 44, 56 to 76, 88 to 108, 121 to 141, 153 to 173, 178 to 198, 210 to 230, 241 to 261, 284 to 304, 317 to 337, 345 to 365, 369 to 389, 418 to 438, and 450 to 470; these read VLACTAHFLVVFDTSVITVAL, ASLQWVVNSYTLAFAGLLLFG, VFLGGLAVFTLTSLIGGLATS, AGAAVLAPLAVTMLTTSFAEG, AVALVGGASGNLLGGVFTEFL, VLLVNVPIGIPVLFLAARVLA, LDLPGAVLATAGLTLLTLGVS, AVAVPLAGGLLALLAFVVVEA, LAMLLAGASQVPVWFFLTLSM, LGFVPHALVMLVVGLRVVPWL, VLIAAGAAIGALGFWWQSLLT, AYLGGILGPAVLISIGGGLVG, FGGAFGLAVLLTVTGSGTSGS, and FVGIAVFMLAIAVLTPVLPAL.

Belongs to the major facilitator superfamily.

It localises to the cell membrane. Involved in cephamycin export. The sequence is that of Cephamycin export protein CmcT (cmcT) from Amycolatopsis lactamdurans (Nocardia lactamdurans).